Reading from the N-terminus, the 504-residue chain is Protein phosphatase 1J (504 aa).

Disordered stretches follow at residues 1 to 102 (MLNR…RLPW) and 194 to 217 (PLCLPSTPGTPGVSSPSQLVSPQS). Positions 14–23 (SSSGTSSQRS) are enriched in low complexity. T41 carries the post-translational modification Phosphothreonine. Over residues 59-73 (TAETPVSFSRPTFLQ) the composition is skewed to polar residues. Phosphoserine occurs at positions 65 and 75. The PPM-type phosphatase domain maps to 103-496 (STGYAEVINA…DDISVFVIPL (394 aa)). Positions 197 to 217 (LPSTPGTPGVSSPSQLVSPQS) are enriched in low complexity.

The protein belongs to the PP2C family. In terms of assembly, interacts with UBE2I/UBC9.

It carries out the reaction O-phospho-L-seryl-[protein] + H2O = L-seryl-[protein] + phosphate. It catalyses the reaction O-phospho-L-threonyl-[protein] + H2O = L-threonyl-[protein] + phosphate. The polypeptide is Protein phosphatase 1J (Ppm1j) (Rattus norvegicus (Rat)).